The sequence spans 221 residues: Thiamine-phosphate synthase (221 aa).

4-amino-2-methyl-5-(diphosphooxymethyl)pyrimidine is bound by residues 47-51 and N79; that span reads QYREK. Mg(2+) is bound by residues D80 and D99. 4-amino-2-methyl-5-(diphosphooxymethyl)pyrimidine is bound at residue T118. 144-146 is a 2-[(2R,5Z)-2-carboxy-4-methylthiazol-5(2H)-ylidene]ethyl phosphate binding site; that stretch reads SFT. K147 is a binding site for 4-amino-2-methyl-5-(diphosphooxymethyl)pyrimidine. 2-[(2R,5Z)-2-carboxy-4-methylthiazol-5(2H)-ylidene]ethyl phosphate-binding positions include G175 and 195-196; that span reads VT.

It belongs to the thiamine-phosphate synthase family. Mg(2+) serves as cofactor.

It carries out the reaction 2-[(2R,5Z)-2-carboxy-4-methylthiazol-5(2H)-ylidene]ethyl phosphate + 4-amino-2-methyl-5-(diphosphooxymethyl)pyrimidine + 2 H(+) = thiamine phosphate + CO2 + diphosphate. The enzyme catalyses 2-(2-carboxy-4-methylthiazol-5-yl)ethyl phosphate + 4-amino-2-methyl-5-(diphosphooxymethyl)pyrimidine + 2 H(+) = thiamine phosphate + CO2 + diphosphate. The catalysed reaction is 4-methyl-5-(2-phosphooxyethyl)-thiazole + 4-amino-2-methyl-5-(diphosphooxymethyl)pyrimidine + H(+) = thiamine phosphate + diphosphate. Its pathway is cofactor biosynthesis; thiamine diphosphate biosynthesis; thiamine phosphate from 4-amino-2-methyl-5-diphosphomethylpyrimidine and 4-methyl-5-(2-phosphoethyl)-thiazole: step 1/1. Its function is as follows. Condenses 4-methyl-5-(beta-hydroxyethyl)thiazole monophosphate (THZ-P) and 2-methyl-4-amino-5-hydroxymethyl pyrimidine pyrophosphate (HMP-PP) to form thiamine monophosphate (TMP). This chain is Thiamine-phosphate synthase, found in Caldicellulosiruptor saccharolyticus (strain ATCC 43494 / DSM 8903 / Tp8T 6331).